The chain runs to 389 residues: Tryptophan synthase beta chain (389 aa).

Lysine 84 bears the N6-(pyridoxal phosphate)lysine mark.

Belongs to the TrpB family. As to quaternary structure, tetramer of two alpha and two beta chains. Pyridoxal 5'-phosphate is required as a cofactor.

The catalysed reaction is (1S,2R)-1-C-(indol-3-yl)glycerol 3-phosphate + L-serine = D-glyceraldehyde 3-phosphate + L-tryptophan + H2O. It participates in amino-acid biosynthesis; L-tryptophan biosynthesis; L-tryptophan from chorismate: step 5/5. Functionally, the beta subunit is responsible for the synthesis of L-tryptophan from indole and L-serine. The polypeptide is Tryptophan synthase beta chain (Clostridium novyi (strain NT)).